We begin with the raw amino-acid sequence, 332 residues long: 2,3-diketo-L-gulonate reductase (332 aa).

The active-site Proton donor is the His-44. Residues 168-174 (ITMVDMS), 224-225 (WK), and 304-306 (GHE) contribute to the NAD(+) site.

The protein belongs to the LDH2/MDH2 oxidoreductase family. DlgD subfamily. As to quaternary structure, homodimer.

The protein localises to the cytoplasm. The enzyme catalyses 3-dehydro-L-gulonate + NAD(+) = 2,3-dioxo-L-gulonate + NADH + H(+). The catalysed reaction is 3-dehydro-L-gulonate + NADP(+) = 2,3-dioxo-L-gulonate + NADPH + H(+). In terms of biological role, catalyzes the reduction of 2,3-diketo-L-gulonate in the presence of NADH, to form 3-keto-L-gulonate. The chain is 2,3-diketo-L-gulonate reductase from Escherichia coli (strain K12 / MC4100 / BW2952).